We begin with the raw amino-acid sequence, 678 residues long: DNA ligase (678 aa).

Residues 47-51, 96-97, and Glu-122 contribute to the NAD(+) site; these read DSDYD and SL. The N6-AMP-lysine intermediate role is filled by Lys-124. NAD(+) is bound by residues Arg-145, Glu-182, Lys-300, and Lys-324. 4 residues coordinate Zn(2+): Cys-418, Cys-421, Cys-436, and Cys-442. A BRCT domain is found at 602 to 678; the sequence is AYNESFTGKT…ILEDNLKDLL (77 aa).

It belongs to the NAD-dependent DNA ligase family. LigA subfamily. Mg(2+) serves as cofactor. Requires Mn(2+) as cofactor.

It catalyses the reaction NAD(+) + (deoxyribonucleotide)n-3'-hydroxyl + 5'-phospho-(deoxyribonucleotide)m = (deoxyribonucleotide)n+m + AMP + beta-nicotinamide D-nucleotide.. Functionally, DNA ligase that catalyzes the formation of phosphodiester linkages between 5'-phosphoryl and 3'-hydroxyl groups in double-stranded DNA using NAD as a coenzyme and as the energy source for the reaction. It is essential for DNA replication and repair of damaged DNA. The chain is DNA ligase from Francisella tularensis subsp. holarctica (strain LVS).